The chain runs to 117 residues: Ig heavy chain V region 345 (117 aa).

An N-terminal signal peptide occupies residues 1–19 (MNFGLRLIFLVLTLKGVKC). Residues 20-49 (EVQLVESGGGLVKPGGSLKLSCAASGFAFS) are framework-1. Cysteine 41 and cysteine 115 form a disulfide bridge. The segment at 50-54 (SYDMS) is complementarity-determining-1. A framework-2 region spans residues 55 to 68 (WVRQTPEKRLEWVA). A complementarity-determining-2 region spans residues 69–85 (YISSGGGSTYYPDTVKG). A framework-3 region spans residues 86–117 (RFTISRDNAKNTLYLQMSSLKSEDTAMYYCAR).

This chain is Ig heavy chain V region 345, found in Mus musculus (Mouse).